The primary structure comprises 100 residues: Small ribosomal subunit protein uS14c (100 aa).

It belongs to the universal ribosomal protein uS14 family. Part of the 30S ribosomal subunit.

It localises to the plastid. The protein resides in the chloroplast. In terms of biological role, binds 16S rRNA, required for the assembly of 30S particles. This chain is Small ribosomal subunit protein uS14c, found in Morus indica (Mulberry).